Consider the following 83-residue polypeptide: Exodeoxyribonuclease 7 small subunit (83 aa).

The segment at 63-83 is disordered; sequence VQNDDGTTGTEPLADTGESGR.

This sequence belongs to the XseB family. As to quaternary structure, heterooligomer composed of large and small subunits.

The protein localises to the cytoplasm. It carries out the reaction Exonucleolytic cleavage in either 5'- to 3'- or 3'- to 5'-direction to yield nucleoside 5'-phosphates.. Functionally, bidirectionally degrades single-stranded DNA into large acid-insoluble oligonucleotides, which are then degraded further into small acid-soluble oligonucleotides. The protein is Exodeoxyribonuclease 7 small subunit of Gluconobacter oxydans (strain 621H) (Gluconobacter suboxydans).